Here is a 249-residue protein sequence, read N- to C-terminus: MIT domain-containing protein 1 (249 aa).

In terms of domain architecture, MIT spans 8-86 (QDPQSTAAAT…KYLDQEKEDG (79 aa)). The segment at 168 to 231 (RGLQEIEESL…SLGYCDFDLR (64 aa)) is important for association with membranes.

In terms of assembly, homodimer. Interacts (via MIT domain) with CHMP1A, CHMP1B, CHMP2A and IST1.

The protein localises to the late endosome membrane. The protein resides in the midbody. It is found in the membrane. Functionally, required for efficient abscission at the end of cytokinesis, together with components of the ESCRT-III complex. In Homo sapiens (Human), this protein is MIT domain-containing protein 1 (MITD1).